We begin with the raw amino-acid sequence, 486 residues long: Malonate-semialdehyde dehydrogenase 1 (486 aa).

NAD(+)-binding residues include Phe154, Lys178, Glu181, Arg182, and Ser231. Cys286 functions as the Nucleophile in the catalytic mechanism. Glu386 is an NAD(+) binding site.

This sequence belongs to the aldehyde dehydrogenase family. IolA subfamily. In terms of assembly, homotetramer.

It carries out the reaction 3-oxopropanoate + NAD(+) + CoA + H2O = hydrogencarbonate + acetyl-CoA + NADH + H(+). The catalysed reaction is 2-methyl-3-oxopropanoate + NAD(+) + CoA + H2O = propanoyl-CoA + hydrogencarbonate + NADH + H(+). Its pathway is polyol metabolism; myo-inositol degradation into acetyl-CoA; acetyl-CoA from myo-inositol: step 7/7. Catalyzes the oxidation of malonate semialdehyde (MSA) and methylmalonate semialdehyde (MMSA) into acetyl-CoA and propanoyl-CoA, respectively. Is involved in a myo-inositol catabolic pathway. Bicarbonate, and not CO2, is the end-product of the enzymatic reaction. This chain is Malonate-semialdehyde dehydrogenase 1, found in Oceanobacillus iheyensis (strain DSM 14371 / CIP 107618 / JCM 11309 / KCTC 3954 / HTE831).